We begin with the raw amino-acid sequence, 1013 residues long: MALPLLLLLLLLLPPRVLPAAPSSVPHGRQLPGRLGCLLEEGLCGASEACVNDGVFGRCQKVPAMDFYRYEVSPVALQRLRVALQKLSGTGFTWQDDYTQYVMDQELADLPKTYLRHPEASGPARPSKHSIGSERRYSQEGGAALAKAFRRHLPFLEALSQAPASDALARTRMAQDRPRAEGDDRFSKSILTYVAHTSVLTYPPGPQAQLPEDLLPRTLSQLQPDELSPKVDSSVERHHLMAALSAYAAQRPPAPPGKGSLEPQYLLRAPSRMPRPLLSPAVPQKWPSPLGDPEDPPSTGEGARIHTLLKDLQRQPAEARGLSDLELDSMAELMAGLMQGMDHRGALGGPGKAALGESGEQADGPKAALRGESFPDDGVQDDDDRLYQEVHRLSATLGGLLQDHGSRLSPGALPFAKPLKMERKKSERPEASLSSEEETAGVENVKSQTYSKDLLGQQPHSEPGAGAFGELQNQMPGPSEEEQSLPAGAQEALGDGLQLEVKPSEEEARGYIVTDRDPLRPEEGRQLVEDVARLLQMPSSTFADVEVLGPAVTFKVGANVQNVTTADVEKATVDNKDKLEETSGLKILQTGVGSKSKLKFLPPQAEQEDSTKFIALTLVSLACILGVLLASGLIYCLRHSSQHRLKEKLSGLGRDPGADATAAYQELCRQRMATRPPDRPEGPHTSRISSVSSQFSDGPMPSPSARSSASSWSEEPVQSNMDISTGHMILSYMEDHLKNKNRLEKEWEALCAYQAEPNSSLVAQKEENVPKNRSLAVLTYDHSRVLLKAENSHSHSDYINASPIMDHDPRNPAYIATQGPLPATVADFWQMVWESGCVVIVMLTPLTENGVRQCYHYWPDEGSNLYHIYEVNLVSEHIWCEDFLVRSFYLKNLQTNETRTVTQFHFLSWYDRGVPSSSRSLLDFRRKVNKCYRGRSCPIIVHCSDGAGRSGTYVLIDMVLNKMAKGAKEIDIAATLEHLRDQRPGMVQTKEQFEFALTAVAEEVNAILKALPQ.

Residues 1–19 form the signal peptide; sequence MALPLLLLLLLLLPPRVLP. The involved in localization to secretory granules; interaction with CPE stretch occupies residues 1 to 419; that stretch reads MALPLLLLLL…PGALPFAKPL (419 aa). Residues 20 to 613 lie on the Extracellular side of the membrane; the sequence is AAPSSVPHGR…QAEQEDSTKF (594 aa). Disordered stretches follow at residues 116 to 137, 273 to 302, 342 to 382, and 401 to 487; these read RHPE…ERRY, MPRP…TGEG, DHRG…VQDD, and LQDH…SLPA. Basic and acidic residues predominate over residues 419-430; sequence LKMERKKSERPE. A phosphoserine mark is found at Ser434 and Ser435. The N-linked (GlcNAc...) asparagine glycan is linked to Asn562. A helical transmembrane segment spans residues 614–634; sequence IALTLVSLACILGVLLASGLI. Residues 635–1013 are Cytoplasmic-facing; the sequence is YCLRHSSQHR…VNAILKALPQ (379 aa). Positions 664–673 match the Tyrosine-based internalization motif motif; that stretch reads YQELCRQRMA. Residues 673–717 form a disordered region; sequence ATRPPDRPEGPHTSRISSVSSQFSDGPMPSPSARSSASSWSEEPV. Residues 686–696 are compositionally biased toward polar residues; the sequence is SRISSVSSQFS. Residues Ser690 and Ser696 each carry the phosphoserine modification. Residues 703 to 717 show a composition bias toward low complexity; sequence PSARSSASSWSEEPV. Residues 743-1003 form the Tyrosine-protein phosphatase domain; the sequence is LEKEWEALCA…EFALTAVAEE (261 aa). Substrate is bound by residues Asp911 and 943–949; that span reads CSDGAGR. The Phosphocysteine intermediate role is filled by Cys943. Residue Lys968 is modified to N6-acetyllysine. Gln988 is a binding site for substrate. Residues 1002-1008 carry the Leucine-based sorting signal motif; that stretch reads EEVNAIL.

Belongs to the protein-tyrosine phosphatase family. Receptor class 8 subfamily. As to quaternary structure, self-associates. Interacts (via cytoplasmic domain) with PTPRN (via cytoplasmic domain). Interacts (precursor form) with CPE. Interacts with HAP1. Interacts with AP2A1 or AP2A2 and AP1G1; indicative for an association with adaptor protein complex 2 (AP-2) and adaptor protein complex 1 (AP-1). Interacts with AP2M1; indicative for an association with adaptor protein complex 2 (AP-2). Interacts with MYO5A. Subject to proteolytic cleavage at multiple sites. In terms of tissue distribution, detected in pancreatic islets and adrenal medulla.

It localises to the cytoplasmic vesicle. The protein resides in the secretory vesicle membrane. Its subcellular location is the secretory vesicle. It is found in the synaptic vesicle membrane. The catalysed reaction is O-phospho-L-tyrosyl-[protein] + H2O = L-tyrosyl-[protein] + phosphate. Functionally, plays a role in vesicle-mediated secretory processes. Required for normal accumulation of secretory vesicles in hippocampus, pituitary and pancreatic islets. Required for the accumulation of normal levels of insulin-containing vesicles and preventing their degradation. Plays a role in insulin secretion in response to glucose stimuli. Required for normal accumulation of the neurotransmitters norepinephrine, dopamine and serotonin in the brain. In females, but not in males, required for normal accumulation and secretion of pituitary hormones, such as luteinizing hormone (LH) and follicle-stimulating hormone (FSH). Required to maintain normal levels of renin expression and renin release. May regulate catalytic active protein-tyrosine phosphatases such as PTPRA through dimerization. Has phosphatidylinositol phosphatase activity; the PIPase activity is involved in its ability to regulate insulin secretion. Can dephosphorylate phosphatidylinositol 4,5-biphosphate, phosphatidylinositol 5-phosphate and phosphatidylinositol 3-phosphate. Regulates PI(4,5)P2 level in the plasma membrane and localization of cofilin at the plasma membrane and thus is indirectly involved in regulation of actin dynamics related to cell migration and metastasis; upon hydrolysis of PI(4,5)P2 cofilin is released from the plasma membrane and acts in the cytoplasm in severing F-actin filaments. This Macaca nemestrina (Pig-tailed macaque) protein is Receptor-type tyrosine-protein phosphatase N2 (PTPRN2).